The chain runs to 211 residues: NADH-quinone oxidoreductase subunit A (211 aa).

3 helical membrane-spanning segments follow: residues Trp7 to Pro27, Phe61 to Tyr81, and Val88 to Ile108.

Belongs to the complex I subunit 3 family. In terms of assembly, NDH-1 is composed of 14 different subunits. Subunits NuoA, H, J, K, L, M, N constitute the membrane sector of the complex.

The protein localises to the cell inner membrane. It carries out the reaction a quinone + NADH + 5 H(+)(in) = a quinol + NAD(+) + 4 H(+)(out). Functionally, NDH-1 shuttles electrons from NADH, via FMN and iron-sulfur (Fe-S) centers, to quinones in the respiratory chain. The immediate electron acceptor for the enzyme in this species is believed to be ubiquinone. Couples the redox reaction to proton translocation (for every two electrons transferred, four hydrogen ions are translocated across the cytoplasmic membrane), and thus conserves the redox energy in a proton gradient. The sequence is that of NADH-quinone oxidoreductase subunit A from Psychrobacter sp. (strain PRwf-1).